We begin with the raw amino-acid sequence, 196 residues long: GTP cyclohydrolase-2 (196 aa).

Residue 49 to 53 (RVHSE) coordinates GTP. Residues C54, C65, and C67 each contribute to the Zn(2+) site. Residues Q70, 92-94 (EGR), and T114 contribute to the GTP site. The active-site Proton acceptor is D126. R128 functions as the Nucleophile in the catalytic mechanism. GTP-binding residues include T149 and K154.

The protein belongs to the GTP cyclohydrolase II family. As to quaternary structure, homodimer. Zn(2+) serves as cofactor.

The catalysed reaction is GTP + 4 H2O = 2,5-diamino-6-hydroxy-4-(5-phosphoribosylamino)-pyrimidine + formate + 2 phosphate + 3 H(+). It functions in the pathway cofactor biosynthesis; riboflavin biosynthesis; 5-amino-6-(D-ribitylamino)uracil from GTP: step 1/4. Its function is as follows. Catalyzes the conversion of GTP to 2,5-diamino-6-ribosylamino-4(3H)-pyrimidinone 5'-phosphate (DARP), formate and pyrophosphate. The chain is GTP cyclohydrolase-2 from Salmonella choleraesuis (strain SC-B67).